The sequence spans 346 residues: Phosphate acyltransferase (346 aa).

The protein belongs to the PlsX family. Homodimer. Probably interacts with PlsY.

It localises to the cytoplasm. The catalysed reaction is a fatty acyl-[ACP] + phosphate = an acyl phosphate + holo-[ACP]. The protein operates within lipid metabolism; phospholipid metabolism. Functionally, catalyzes the reversible formation of acyl-phosphate (acyl-PO(4)) from acyl-[acyl-carrier-protein] (acyl-ACP). This enzyme utilizes acyl-ACP as fatty acyl donor, but not acyl-CoA. The polypeptide is Phosphate acyltransferase (Pelobacter propionicus (strain DSM 2379 / NBRC 103807 / OttBd1)).